The chain runs to 154 residues: Urease accessory protein UreE (154 aa).

The disordered stretch occupies residues 135 to 154 (YGHGRTFGHDHGHAHDHHHA).

It belongs to the UreE family.

It is found in the cytoplasm. Involved in urease metallocenter assembly. Binds nickel. Probably functions as a nickel donor during metallocenter assembly. In Paracoccus denitrificans (strain Pd 1222), this protein is Urease accessory protein UreE.